The primary structure comprises 1964 residues: Probable helicase with zinc finger domain (1964 aa).

The C3H1-type zinc finger occupies 178 to 206 (SEEYTLCKRFLEQGICRYGAQCTSAHSQE). Ser-248 is subject to Phosphoserine. Residue 668–675 (GPYGTGKT) coordinates ATP. The short motif at 794–797 (DEAA) is the DEAA box element. The span at 1116 to 1127 (HSGNSSRQQQSP) shows a compositional bias: polar residues. A disordered region spans residues 1116-1135 (HSGNSSRQQQSPPKVKSLYH). A Phosphothreonine modification is found at Thr-1163. Omega-N-methylarginine is present on Arg-1245. Disordered regions lie at residues 1248–1350 (PIPY…LPAP), 1360–1379 (HFHPLPQLPRPPFPASQPHT), 1388–1449 (LPEQ…QAGP), 1463–1491 (QSPAAEAVGPEQPPPPGLPDGHSPLRAIT), 1631–1655 (QVQPRSPPAVPSPPSSTDHSSQFAN), and 1743–1964 (QHAA…SYFK). Composition is skewed to basic and acidic residues over residues 1268-1281 (HAEKDQQEQNRNGK) and 1292-1308 (NKIRTPEKKPTEPKQVD). A compositionally biased stretch (pro residues) spans 1365 to 1374 (PQLPRPPFPA). Residues 1388–1431 (LPEQPNQMAPQPNQVAPQPNQMTPQPNQVAPQPNQVVQQQSQAP) are compositionally biased toward low complexity. The span at 1635–1644 (RSPPAVPSPP) shows a compositional bias: pro residues. 4 positions are modified to phosphoserine: Ser-1636, Ser-1760, Ser-1763, and Ser-1788. The segment covering 1755–1765 (SSRTVSASSLP) has biased composition (polar residues). Composition is skewed to polar residues over residues 1799–1813 (PQDSLAQGKESQGHS) and 1826–1849 (WANTTSSAPYQNIPCNGSSRTSQP). A compositionally biased stretch (basic and acidic residues) spans 1860-1870 (KPPEDQLKPES). Composition is skewed to polar residues over residues 1872 to 1881 (EVSSSFNYSM) and 1897 to 1910 (IAESANCSSQQSPA). Low complexity predominate over residues 1941 to 1956 (PLSLLQELSLGSSPGS).

The protein belongs to the DNA2/NAM7 helicase family. In terms of assembly, interacts with POLR2A. Interacts with SMYD3; the interaction may bridge SMYD3 and RNA polymerase II. Interacts with SMYD2.

Its subcellular location is the nucleus. Its function is as follows. May act as a helicase that plays a role in RNA metabolism in multiple tissues and organs within the developing embryo. The sequence is that of Probable helicase with zinc finger domain (Helz) from Mus musculus (Mouse).